A 192-amino-acid chain; its full sequence is Imidazole glycerol phosphate synthase subunit HisH (192 aa).

In terms of domain architecture, Glutamine amidotransferase type-1 spans 1–192 (MIVIVDYGLG…QAIQGGFIND (192 aa)). The active-site Nucleophile is Cys-77. Active-site residues include His-169 and Glu-171.

Heterodimer of HisH and HisF.

It is found in the cytoplasm. The enzyme catalyses 5-[(5-phospho-1-deoxy-D-ribulos-1-ylimino)methylamino]-1-(5-phospho-beta-D-ribosyl)imidazole-4-carboxamide + L-glutamine = D-erythro-1-(imidazol-4-yl)glycerol 3-phosphate + 5-amino-1-(5-phospho-beta-D-ribosyl)imidazole-4-carboxamide + L-glutamate + H(+). It catalyses the reaction L-glutamine + H2O = L-glutamate + NH4(+). It functions in the pathway amino-acid biosynthesis; L-histidine biosynthesis; L-histidine from 5-phospho-alpha-D-ribose 1-diphosphate: step 5/9. In terms of biological role, IGPS catalyzes the conversion of PRFAR and glutamine to IGP, AICAR and glutamate. The HisH subunit catalyzes the hydrolysis of glutamine to glutamate and ammonia as part of the synthesis of IGP and AICAR. The resulting ammonia molecule is channeled to the active site of HisF. This chain is Imidazole glycerol phosphate synthase subunit HisH, found in Staphylococcus aureus (strain bovine RF122 / ET3-1).